Consider the following 157-residue polypeptide: 2-C-methyl-D-erythritol 2,4-cyclodiphosphate synthase (157 aa).

Residues aspartate 8 and histidine 10 each coordinate a divalent metal cation. 4-CDP-2-C-methyl-D-erythritol 2-phosphate contacts are provided by residues 8 to 10 and 34 to 35; these read DVH and HS. Histidine 42 contacts a divalent metal cation. 4-CDP-2-C-methyl-D-erythritol 2-phosphate is bound by residues 56–58, 61–65, 100–106, 132–135, phenylalanine 139, and arginine 142; these read DIG, FPDTD, AQAPKMA, and TTTE.

It belongs to the IspF family. In terms of assembly, homotrimer. A divalent metal cation serves as cofactor.

The enzyme catalyses 4-CDP-2-C-methyl-D-erythritol 2-phosphate = 2-C-methyl-D-erythritol 2,4-cyclic diphosphate + CMP. Its pathway is isoprenoid biosynthesis; isopentenyl diphosphate biosynthesis via DXP pathway; isopentenyl diphosphate from 1-deoxy-D-xylulose 5-phosphate: step 4/6. Involved in the biosynthesis of isopentenyl diphosphate (IPP) and dimethylallyl diphosphate (DMAPP), two major building blocks of isoprenoid compounds. Catalyzes the conversion of 4-diphosphocytidyl-2-C-methyl-D-erythritol 2-phosphate (CDP-ME2P) to 2-C-methyl-D-erythritol 2,4-cyclodiphosphate (ME-CPP) with a corresponding release of cytidine 5-monophosphate (CMP). This is 2-C-methyl-D-erythritol 2,4-cyclodiphosphate synthase from Stutzerimonas stutzeri (strain A1501) (Pseudomonas stutzeri).